Reading from the N-terminus, the 228-residue chain is Putative adhesin A1I_01215 (228 aa).

The N-terminal stretch at methionine 1–alanine 22 is a signal peptide.

This chain is Putative adhesin A1I_01215, found in Rickettsia bellii (strain OSU 85-389).